Consider the following 103-residue polypeptide: MQNQRIRIRLKAFDHKLIDASTQEIVETAKRTGAQVRGPIPLPTRKERYTVLVSPHVNKDARDQYEIRTYKRLLDIVEPTEKTVDALMKLDLAAGVEVQISLG.

It belongs to the universal ribosomal protein uS10 family. In terms of assembly, part of the 30S ribosomal subunit.

Its function is as follows. Involved in the binding of tRNA to the ribosomes. This Saccharophagus degradans (strain 2-40 / ATCC 43961 / DSM 17024) protein is Small ribosomal subunit protein uS10.